Consider the following 602-residue polypeptide: Leucine-rich repeat-containing protein 40 (602 aa).

Positions 1–20 (MSRLKRIAGQDPRAGFKAAG) are disordered. Ser71 carries the post-translational modification Phosphoserine. LRR repeat units lie at residues 83 to 104 (DLTK…LRLL), 106 to 127 (ALTV…MREL), 129 to 150 (NLQK…ITNL), 152 to 173 (NLKC…FEQL), 175 to 196 (NLED…FSSL), 198 to 219 (SLVR…INRM), 221 to 242 (RLKH…LAGM), 244 to 265 (SLEL…PSCS), 266 to 286 (LLKE…EHLK), 290 to 311 (SILV…IILL), 313 to 335 (SLER…GNLH), 336 to 356 (LKFL…IINK), 400 to 421 (TLKI…VFNA), 426 to 447 (IITS…MVEL), 450 to 471 (MVSD…LCML), 473 to 494 (KLTF…MESL), 496 to 517 (RLQT…LYRI), 519 to 540 (TLET…KMKM), 543 to 564 (NLTT…LGNC), and 566 to 586 (NLRT…AILI).

The sequence is that of Leucine-rich repeat-containing protein 40 (LRRC40) from Macaca fascicularis (Crab-eating macaque).